Consider the following 194-residue polypeptide: 7-methyl-GTP pyrophosphatase (194 aa).

Asp-70 acts as the Proton acceptor in catalysis.

This sequence belongs to the Maf family. YceF subfamily. It depends on a divalent metal cation as a cofactor.

It localises to the cytoplasm. The enzyme catalyses N(7)-methyl-GTP + H2O = N(7)-methyl-GMP + diphosphate + H(+). Nucleoside triphosphate pyrophosphatase that hydrolyzes 7-methyl-GTP (m(7)GTP). May have a dual role in cell division arrest and in preventing the incorporation of modified nucleotides into cellular nucleic acids. The chain is 7-methyl-GTP pyrophosphatase from Ralstonia nicotianae (strain ATCC BAA-1114 / GMI1000) (Ralstonia solanacearum).